Consider the following 356-residue polypeptide: Tyrosine recombinase XerS (356 aa).

The Core-binding (CB) domain maps to 16–121; the sequence is IMPWYVLDYY…ALSSLYKYLT (106 aa). The 186-residue stretch at 169–354 folds into the Tyr recombinase domain; that stretch reads AFLDYVDKEY…VNDEQKNALD (186 aa). Residues arginine 210, lysine 234, histidine 306, arginine 309, and histidine 332 contribute to the active site. The active-site O-(3'-phospho-DNA)-tyrosine intermediate is tyrosine 341.

This sequence belongs to the 'phage' integrase family. XerS subfamily.

Its subcellular location is the cytoplasm. FtsK is required for recombination. Functionally, site-specific tyrosine recombinase, which acts by catalyzing the cutting and rejoining of the recombining DNA molecules. Essential to convert dimers of the bacterial chromosome into monomers to permit their segregation at cell division. This chain is Tyrosine recombinase XerS, found in Streptococcus pyogenes serotype M5 (strain Manfredo).